A 360-amino-acid chain; its full sequence is Glycerol-1-phosphate dehydrogenase [NAD(P)+] (360 aa).

NAD(+)-binding positions include 108–112 (GRVID) and 130–133 (TAAS). Residue Asp135 coordinates substrate. Residue Ser139 coordinates NAD(+). Asp182 is a binding site for substrate. Positions 182 and 262 each coordinate Zn(2+). His266 is a substrate binding site. His278 provides a ligand contact to Zn(2+).

Belongs to the glycerol-1-phosphate dehydrogenase family. Zn(2+) serves as cofactor.

The protein localises to the cytoplasm. The enzyme catalyses sn-glycerol 1-phosphate + NAD(+) = dihydroxyacetone phosphate + NADH + H(+). The catalysed reaction is sn-glycerol 1-phosphate + NADP(+) = dihydroxyacetone phosphate + NADPH + H(+). The protein operates within membrane lipid metabolism; glycerophospholipid metabolism. Functionally, catalyzes the NAD(P)H-dependent reduction of dihydroxyacetonephosphate (DHAP or glycerone phosphate) to glycerol 1-phosphate (G1P). The G1P thus generated is used as the glycerophosphate backbone of phospholipids in the cellular membranes of Archaea. The polypeptide is Glycerol-1-phosphate dehydrogenase [NAD(P)+] (Methanoculleus marisnigri (strain ATCC 35101 / DSM 1498 / JR1)).